The following is a 253-amino-acid chain: Fatty acid elongase 5 (253 aa).

Transmembrane regions (helical) follow at residues 24–44, 60–80, 100–120, 127–147, 150–170, 188–208, and 214–234; these read IFVSWSVLVGAHVGYIVLVII, IMMIYNVTQIYISAIMAISLA, FWIFVHYCSKFLDMFDTVLMI, QLSFLHIYHHATIGFIWGLLL, GIGNGTAFFGAWVNSAVHFLM, ILTKIQMFQFFLCIVQASLAP, and FALQWSFLQLTYHITLFILFL. The HxxHH motif signature appears at 132–136; that stretch reads HIYHH. The active-site Nucleophile is the histidine 135.

Belongs to the ELO family.

It localises to the membrane. The enzyme catalyses an acyl-CoA + malonyl-CoA + H(+) = a 3-oxoacyl-CoA + CO2 + CoA. It participates in lipid metabolism; polyunsaturated fatty acid biosynthesis. In terms of biological role, involved in the synthesis of fatty acids. Elongates C20 polyunsaturated fatty acids (PUFAs) with a preference for n-6 PUFAs. This Trypanosoma cruzi (strain CL Brener) protein is Fatty acid elongase 5.